We begin with the raw amino-acid sequence, 540 residues long: MLFCDDSKKYLKEQNINLKNEFDKDDKRVEKFSLKHQNIYFDYSKNLINDYILKSLLESAEKSSLKDKIKQMFNGAKINSTEHRAVLHTALRDLSSTPLIVDGQDIRQEVTKEKQRVKELVEKVVSGRWRGFSGKKITDIVNIGIGGSDLGPKMVVRALQPYHCTDLKVHFVSNVDADSLLQALHVVDPETTLFIIASKSFSTEETLLNSISAREWLLDHYEDEKAVANHFVAISSKLDKVKEFGIDLEHCYKMWDWVGGRYSLWSSIGMSIAFAIGYDNFEKLLAGAYSVDKHFKETEFSKNIPVIMALLASYYSCTYNSQSQALLPYDERLCYFVDYLQQADMESNGKSVNIAGETVNYQTGVVLWGGVGTNGQHAFHQLLHQGNIFIPVDFIAIATSHHNYDNHQQALLANCFAQSQALMFGQSYDMVYNELLKSGLNETQAKELAAHKVIPGNRPSTTILLDELSPYSLGALIALYEHKIFVQGVLWEINSYDQWGVELGKKLGKNILKAMNDDSSDEYQNLDDSTRQLIAKVKNK.

E346 acts as the Proton donor in catalysis. Active-site residues include H377 and K505.

This sequence belongs to the GPI family.

The protein resides in the cytoplasm. The catalysed reaction is alpha-D-glucose 6-phosphate = beta-D-fructose 6-phosphate. Its pathway is carbohydrate biosynthesis; gluconeogenesis. It functions in the pathway carbohydrate degradation; glycolysis; D-glyceraldehyde 3-phosphate and glycerone phosphate from D-glucose: step 2/4. Catalyzes the reversible isomerization of glucose-6-phosphate to fructose-6-phosphate. The chain is Glucose-6-phosphate isomerase from Francisella tularensis subsp. mediasiatica (strain FSC147).